A 154-amino-acid chain; its full sequence is UPF0178 protein ABC1688 (154 aa).

It belongs to the UPF0178 family.

This Shouchella clausii (strain KSM-K16) (Alkalihalobacillus clausii) protein is UPF0178 protein ABC1688.